The following is a 582-amino-acid chain: V-type ATP synthase alpha chain (582 aa).

231 to 238 (GPFGSGKT) contributes to the ATP binding site.

This sequence belongs to the ATPase alpha/beta chains family.

It carries out the reaction ATP + H2O + 4 H(+)(in) = ADP + phosphate + 5 H(+)(out). Functionally, produces ATP from ADP in the presence of a proton gradient across the membrane. The V-type alpha chain is a catalytic subunit. This Deinococcus geothermalis (strain DSM 11300 / CIP 105573 / AG-3a) protein is V-type ATP synthase alpha chain.